The sequence spans 410 residues: Dephospho-CoA kinase (410 aa).

The 199-residue stretch at 3 to 201 folds into the DPCK domain; that stretch reads CIGITGGIGA…HRILPFAYNL (199 aa). 11–16 contributes to the ATP binding site; the sequence is GAGKSL. Residues 196 to 410 are UPF0157; that stretch reads PFAYNLSQRQ…EWADSTGWRL (215 aa).

It in the N-terminal section; belongs to the CoaE family. This sequence in the C-terminal section; belongs to the UPF0157 (GrpB) family.

The protein localises to the cytoplasm. The catalysed reaction is 3'-dephospho-CoA + ATP = ADP + CoA + H(+). The protein operates within cofactor biosynthesis; coenzyme A biosynthesis; CoA from (R)-pantothenate: step 5/5. Catalyzes the phosphorylation of the 3'-hydroxyl group of dephosphocoenzyme A to form coenzyme A. This is Dephospho-CoA kinase from Mycobacterium leprae (strain TN).